The sequence spans 122 residues: Small ribosomal subunit protein uS13 (122 aa).

The interval 97–122 (PVRGQKTKSNARTRKGPRPSRIKKKK) is disordered. A compositionally biased stretch (basic residues) spans 101 to 122 (QKTKSNARTRKGPRPSRIKKKK).

It belongs to the universal ribosomal protein uS13 family. As to quaternary structure, part of the 30S ribosomal subunit. Forms a loose heterodimer with protein S19. Forms two bridges to the 50S subunit in the 70S ribosome.

In terms of biological role, located at the top of the head of the 30S subunit, it contacts several helices of the 16S rRNA. In the 70S ribosome it contacts the 23S rRNA (bridge B1a) and protein L5 of the 50S subunit (bridge B1b), connecting the 2 subunits; these bridges are implicated in subunit movement. Contacts the tRNAs in the A and P-sites. This Thermosipho melanesiensis (strain DSM 12029 / CIP 104789 / BI429) protein is Small ribosomal subunit protein uS13.